The sequence spans 1372 residues: uncharacterized protein (1372 aa).

The segment at 1–67 is disordered; sequence MEATDQEVML…PPAPSKNPMQ (67 aa). Polar residues predominate over residues 17–28; sequence MSTSATSSTNGG. The stretch at 75-143 forms a coiled coil; the sequence is NLYQTAQEQL…LEEHDRLRRK (69 aa). 5 disordered regions span residues 178–199, 238–287, 380–414, 427–447, and 486–531; these read NDLS…LSGD, HINR…QASS, EVSN…EVRR, QSLE…VPVP, and EERM…DSGI. 2 stretches are compositionally biased toward low complexity: residues 184–198 and 238–251; these read GIGT…SLSG and HINR…HGNG. 2 stretches are compositionally biased toward polar residues: residues 257–287 and 399–408; these read TGPS…QASS and TNGNSATTAP. A coiled-coil region spans residues 409-438; the sequence is KSEVRRLSGDISSIRDRMQSLEQQRKAFSS. A compositionally biased stretch (basic and acidic residues) spans 486–499; sequence EERMRQQQQKEKHS. A compositionally biased stretch (low complexity) spans 514–523; it reads ALIIEEPPVA. Residues 539 to 580 are a coiled coil; it reads LQQQQQLNAAIAALALEERQLEEAANAVNQIEAEFDELTDLH. The span at 652 to 673 shows a compositional bias: low complexity; sequence VSKSGPTPNPTSTPNMVSSSPN. Disordered stretches follow at residues 652–679, 799–820, 860–897, 1151–1181, and 1231–1250; these read VSKS…LRRK, SRQL…RSEH, SQSD…PKRV, SSQM…PIPK, and SPPS…SPTK. 2 stretches are compositionally biased toward polar residues: residues 860-871 and 1151-1160; these read SQSDSKSLTSPI and SSQMMKTSLP.

This is an uncharacterized protein from Drosophila melanogaster (Fruit fly).